The chain runs to 344 residues: Galactinol synthase 1 (344 aa).

Lysine 111 is an active-site residue. 3 residues coordinate Mn(2+): aspartate 127, aspartate 129, and histidine 265.

It belongs to the glycosyltransferase 8 family. Galactosyltransferase subfamily. It depends on a divalent metal cation as a cofactor. Accumulates in mature seeds. Expressed in seedlings (axes and cotyledons), meristems, vascular tissues and emerging lateral roots. Present in abscission zones.

It is found in the cytoplasm. The enzyme catalyses myo-inositol + UDP-alpha-D-galactose = alpha-D-galactosyl-(1-&gt;3)-1D-myo-inositol + UDP + H(+). Functionally, galactinol synthase involved in the biosynthesis of raffinose family oligosaccharides (RFOs) that function as osmoprotectants. Promotes plant stress tolerance such as heat, chilling, salinity and methylviologen (MV), a superoxide radical generating drug, by mediating raffinose accumulation, an osmoprotective substance. The polypeptide is Galactinol synthase 1 (GOLS1) (Arabidopsis thaliana (Mouse-ear cress)).